The sequence spans 429 residues: Glutamate-1-semialdehyde 2,1-aminomutase (429 aa).

N6-(pyridoxal phosphate)lysine is present on Lys-265.

Belongs to the class-III pyridoxal-phosphate-dependent aminotransferase family. HemL subfamily. As to quaternary structure, homodimer. Pyridoxal 5'-phosphate serves as cofactor.

It localises to the cytoplasm. The enzyme catalyses (S)-4-amino-5-oxopentanoate = 5-aminolevulinate. It functions in the pathway porphyrin-containing compound metabolism; protoporphyrin-IX biosynthesis; 5-aminolevulinate from L-glutamyl-tRNA(Glu): step 2/2. The polypeptide is Glutamate-1-semialdehyde 2,1-aminomutase (Shewanella halifaxensis (strain HAW-EB4)).